Here is an 85-residue protein sequence, read N- to C-terminus: Conotoxin Lv15a (85 aa).

The signal sequence occupies residues 1–23 (MEKLTVLILVATVLLMIQVLAQS). Residues 24-49 (GGDKHLKRRPKQYATKRLSALMRGHR) constitute a propeptide that is removed on maturation. Position 50 is a pyrrolidone carboxylic acid (Gln50).

This sequence belongs to the conotoxin O2 superfamily. Post-translationally, contains 4 disulfide bonds. Expressed by the venom duct.

The protein resides in the secreted. This Conus lividus (Livid cone) protein is Conotoxin Lv15a.